The primary structure comprises 177 residues: Large ribosomal subunit protein uL10 (177 aa).

Belongs to the universal ribosomal protein uL10 family. In terms of assembly, part of the ribosomal stalk of the 50S ribosomal subunit. The N-terminus interacts with L11 and the large rRNA to form the base of the stalk. The C-terminus forms an elongated spine to which L12 dimers bind in a sequential fashion forming a multimeric L10(L12)X complex.

Forms part of the ribosomal stalk, playing a central role in the interaction of the ribosome with GTP-bound translation factors. The polypeptide is Large ribosomal subunit protein uL10 (Kocuria rhizophila (strain ATCC 9341 / DSM 348 / NBRC 103217 / DC2201)).